The sequence spans 54 residues: Ovomucoid (54 aa).

The Kazal-like domain occupies 4–54; the sequence is VDCSDYPKPVCSLEDMPLCGSDSKTYSNKCNFCNAVVDSNGTLTLSHFGKC. Disulfide bonds link Cys6-Cys36, Cys14-Cys33, and Cys22-Cys54. N-linked (GlcNAc...) asparagine glycosylation is present at Asn43.

Its subcellular location is the secreted. The sequence is that of Ovomucoid from Vultur gryphus (Andean condor).